The chain runs to 1070 residues: DNA-directed RNA polymerase subunit beta (1070 aa).

It belongs to the RNA polymerase beta chain family. In terms of assembly, in plastids the minimal PEP RNA polymerase catalytic core is composed of four subunits: alpha, beta, beta', and beta''. When a (nuclear-encoded) sigma factor is associated with the core the holoenzyme is formed, which can initiate transcription.

The protein localises to the plastid. The protein resides in the chloroplast. It carries out the reaction RNA(n) + a ribonucleoside 5'-triphosphate = RNA(n+1) + diphosphate. Functionally, DNA-dependent RNA polymerase catalyzes the transcription of DNA into RNA using the four ribonucleoside triphosphates as substrates. This chain is DNA-directed RNA polymerase subunit beta, found in Nicotiana tomentosiformis (Tobacco).